A 622-amino-acid polypeptide reads, in one-letter code: Probable potassium transport system protein Kup 1 (622 aa).

12 helical membrane-spanning segments follow: residues 11–31, 50–70, 101–121, 137–157, 168–188, 215–235, 247–267, 285–305, 337–357, 366–386, 393–413, and 419–439; these read LTLG…LYAV, ILSI…VTLV, VLLL…VITP, PAFN…LFWV, FFGP…VAQI, FIIL…YADL, WFAV…ALLL, ALLP…QALI, IYLP…VMIF, AYGI…FFVI, PLWL…AFWA, and LFDG…LMIT.

This sequence belongs to the HAK/KUP transporter (TC 2.A.72) family.

It localises to the cell inner membrane. It catalyses the reaction K(+)(in) + H(+)(in) = K(+)(out) + H(+)(out). Its function is as follows. Transport of potassium into the cell. Likely operates as a K(+):H(+) symporter. This Albidiferax ferrireducens (strain ATCC BAA-621 / DSM 15236 / T118) (Rhodoferax ferrireducens) protein is Probable potassium transport system protein Kup 1.